A 460-amino-acid polypeptide reads, in one-letter code: Spermatogenesis-defective protein 39 homolog (460 aa).

Thr-21 bears the Phosphothreonine mark. Residues 70–101 form a disordered region; it reads SIKETAGSSGSTSEGREQMKGRNSFYTQLPKP. Over residues 73-82 the composition is skewed to low complexity; that stretch reads ETAGSSGSTS. Thr-115 is modified (phosphothreonine). Phosphoserine occurs at positions 119, 122, and 128. The span at 121–133 shows a compositional bias: polar residues; sequence QSLSDALSDTPAK. Residues 121-141 are disordered; the sequence is QSLSDALSDTPAKTYSPELGR. A Phosphothreonine modification is found at Thr-130.

The protein belongs to the SPE39 family. In terms of assembly, interacts with VPS33B. Associates with the homotypic fusion and vacuole protein sorting (HOPS) complex; impaired by VPS33B. Interacts with RAB11A.

The protein localises to the cytoplasm. The protein resides in the cytoplasmic vesicle. It localises to the early endosome. Its subcellular location is the recycling endosome. It is found in the late endosome. Functionally, proposed to be involved in endosomal maturation implicating in part VPS33B. In epithelial cells, the VPS33B:VIPAS39 complex may play a role in the apical RAB11A-dependent recycling pathway and in the maintenance of the apical-basolateral polarity. May play a role in lysosomal trafficking, probably via association with the core HOPS complex in a discrete population of endosomes; the functions seems to be independent of VPS33B. May play a role in vesicular trafficking during spermatogenesis. May be involved in direct or indirect transcriptional regulation of E-cadherin. This chain is Spermatogenesis-defective protein 39 homolog (Vipas39), found in Rattus norvegicus (Rat).